Consider the following 31-residue polypeptide: Cytochrome b6-f complex subunit 6 (31 aa).

A helical transmembrane segment spans residues 3–23 (IAIDYFLLVGFCFAFTSGLYL).

Belongs to the PetL family. In terms of assembly, the 4 large subunits of the cytochrome b6-f complex are cytochrome b6, subunit IV (17 kDa polypeptide, PetD), cytochrome f and the Rieske protein, while the 4 small subunits are PetG, PetL, PetM and PetN. The complex functions as a dimer.

The protein localises to the plastid. It localises to the chloroplast thylakoid membrane. Its function is as follows. Component of the cytochrome b6-f complex, which mediates electron transfer between photosystem II (PSII) and photosystem I (PSI), cyclic electron flow around PSI, and state transitions. PetL is important for photoautotrophic growth as well as for electron transfer efficiency and stability of the cytochrome b6-f complex. The polypeptide is Cytochrome b6-f complex subunit 6 (Trieres chinensis (Marine centric diatom)).